A 197-amino-acid chain; its full sequence is Ras-related protein Rab-7B (197 aa).

Residues 14–21 (GEKSVGKT), 33–38 (VTLKPT), 57–61 (DTSGQ), 119–122 (NKID), and 152–153 (AK) each bind GTP. The Effector region motif lies at 31 to 39 (RFVTLKPTI). S-geranylgeranyl cysteine attachment occurs at residues cysteine 196 and cysteine 197.

Belongs to the small GTPase superfamily. Rab family.

Protein transport. Probably involved in vesicular traffic. The polypeptide is Ras-related protein Rab-7B (rab7B) (Dictyostelium discoideum (Social amoeba)).